The chain runs to 166 residues: MGLNITNRQGFLLVAAACAGAIGFALFAQYQLGEEPCPLCILQRIGVMAVGALALLAALHNPGKTGAKVWGGLMTLAALSGAGVSLRQLWLQSLPADQVPQCGPGLEFLMESFPLWEVLSKVLKGSGECAAIQGRFLGMTMPFWVAVFFAGVIVWTLWLVGRRRRG.

At 1–10 the chain is on the cytoplasmic side; that stretch reads MGLNITNRQG. The helical transmembrane segment at 11 to 27 threads the bilayer; the sequence is FLLVAAACAGAIGFALF. The Periplasmic segment spans residues 28–45; that stretch reads AQYQLGEEPCPLCILQRI. Residues Cys37 and Cys40 are joined by a disulfide bond. Residues 46–62 traverse the membrane as a helical segment; sequence GVMAVGALALLAALHNP. Over 63-69 the chain is Cytoplasmic; the sequence is GKTGAKV. The chain crosses the membrane as a helical span at residues 70–86; sequence WGGLMTLAALSGAGVSL. Residues 87–143 lie on the Periplasmic side of the membrane; sequence RQLWLQSLPADQVPQCGPGLEFLMESFPLWEVLSKVLKGSGECAAIQGRFLGMTMPF. Residues Cys102 and Cys129 are joined by a disulfide bond. The chain crosses the membrane as a helical span at residues 144-162; the sequence is WVAVFFAGVIVWTLWLVGR. Residues 163 to 166 lie on the Cytoplasmic side of the membrane; sequence RRRG.

It belongs to the DsbB family.

It localises to the cell inner membrane. In terms of biological role, required for disulfide bond formation in some periplasmic proteins. Acts by oxidizing the DsbA protein. This chain is Disulfide bond formation protein B, found in Chromobacterium violaceum (strain ATCC 12472 / DSM 30191 / JCM 1249 / CCUG 213 / NBRC 12614 / NCIMB 9131 / NCTC 9757 / MK).